A 432-amino-acid chain; its full sequence is 3-phosphoshikimate 1-carboxyvinyltransferase (432 aa).

Positions 21, 22, and 26 each coordinate 3-phosphoshikimate. Lys-21 contributes to the phosphoenolpyruvate binding site. Residues Gly-93 and Arg-121 each contribute to the phosphoenolpyruvate site. Residues Ser-166, Gln-168, Asp-318, and Lys-345 each coordinate 3-phosphoshikimate. Phosphoenolpyruvate is bound at residue Gln-168. The Proton acceptor role is filled by Asp-318. Phosphoenolpyruvate is bound by residues Arg-349 and Arg-391.

This sequence belongs to the EPSP synthase family. Monomer.

It localises to the cytoplasm. The catalysed reaction is 3-phosphoshikimate + phosphoenolpyruvate = 5-O-(1-carboxyvinyl)-3-phosphoshikimate + phosphate. Its pathway is metabolic intermediate biosynthesis; chorismate biosynthesis; chorismate from D-erythrose 4-phosphate and phosphoenolpyruvate: step 6/7. In terms of biological role, catalyzes the transfer of the enolpyruvyl moiety of phosphoenolpyruvate (PEP) to the 5-hydroxyl of shikimate-3-phosphate (S3P) to produce enolpyruvyl shikimate-3-phosphate and inorganic phosphate. The polypeptide is 3-phosphoshikimate 1-carboxyvinyltransferase (Persephonella marina (strain DSM 14350 / EX-H1)).